The primary structure comprises 116 residues: Holo-[acyl-carrier-protein] synthase (116 aa).

Residues aspartate 8 and glutamate 50 each coordinate Mg(2+).

It belongs to the P-Pant transferase superfamily. AcpS family. The cofactor is Mg(2+).

The protein resides in the cytoplasm. It carries out the reaction apo-[ACP] + CoA = holo-[ACP] + adenosine 3',5'-bisphosphate + H(+). Transfers the 4'-phosphopantetheine moiety from coenzyme A to a Ser of acyl-carrier-protein. This chain is Holo-[acyl-carrier-protein] synthase, found in Beutenbergia cavernae (strain ATCC BAA-8 / DSM 12333 / CCUG 43141 / JCM 11478 / NBRC 16432 / NCIMB 13614 / HKI 0122).